The chain runs to 69 residues: Cytochrome c oxidase subunit 8A, mitochondrial (69 aa).

The transit peptide at 1 to 25 directs the protein to the mitochondrion; that stretch reads MSVLTPLLLRGLTGSARRLPVPCAR. The SIFI-degron motif lies at 2–19; that stretch reads SVLTPLLLRGLTGSARRL. The Mitochondrial matrix portion of the chain corresponds to 26-36; the sequence is VHSKPPREQLG. Residues 37–60 form a helical membrane-spanning segment; sequence TMDIAIGLTSCFVCFLLPSGWVLS. The Mitochondrial intermembrane portion of the chain corresponds to 61–69; that stretch reads HLENYKKRE.

This sequence belongs to the cytochrome c oxidase VIII family. Component of the cytochrome c oxidase (complex IV, CIV), a multisubunit enzyme composed of 14 subunits. The complex is composed of a catalytic core of 3 subunits MT-CO1, MT-CO2 and MT-CO3, encoded in the mitochondrial DNA, and 11 supernumerary subunits COX4I, COX5A, COX5B, COX6A, COX6B, COX6C, COX7A, COX7B, COX7C, COX8 and NDUFA4, which are encoded in the nuclear genome. The complex exists as a monomer or a dimer and forms supercomplexes (SCs) in the inner mitochondrial membrane with NADH-ubiquinone oxidoreductase (complex I, CI) and ubiquinol-cytochrome c oxidoreductase (cytochrome b-c1 complex, complex III, CIII), resulting in different assemblies (supercomplex SCI(1)III(2)IV(1) and megacomplex MCI(2)III(2)IV(2)). In response to mitochondrial stress, the precursor protein is ubiquitinated by the SIFI complex in the cytoplasm before mitochondrial import, leading to its degradation. Within the SIFI complex, UBR4 initiates ubiquitin chain that are further elongated or branched by KCMF1.

Its subcellular location is the mitochondrion inner membrane. It functions in the pathway energy metabolism; oxidative phosphorylation. Its function is as follows. Component of the cytochrome c oxidase, the last enzyme in the mitochondrial electron transport chain which drives oxidative phosphorylation. The respiratory chain contains 3 multisubunit complexes succinate dehydrogenase (complex II, CII), ubiquinol-cytochrome c oxidoreductase (cytochrome b-c1 complex, complex III, CIII) and cytochrome c oxidase (complex IV, CIV), that cooperate to transfer electrons derived from NADH and succinate to molecular oxygen, creating an electrochemical gradient over the inner membrane that drives transmembrane transport and the ATP synthase. Cytochrome c oxidase is the component of the respiratory chain that catalyzes the reduction of oxygen to water. Electrons originating from reduced cytochrome c in the intermembrane space (IMS) are transferred via the dinuclear copper A center (CU(A)) of subunit 2 and heme A of subunit 1 to the active site in subunit 1, a binuclear center (BNC) formed by heme A3 and copper B (CU(B)). The BNC reduces molecular oxygen to 2 water molecules using 4 electrons from cytochrome c in the IMS and 4 protons from the mitochondrial matrix. In Otolemur crassicaudatus (Brown greater galago), this protein is Cytochrome c oxidase subunit 8A, mitochondrial (COX8A).